A 740-amino-acid polypeptide reads, in one-letter code: MMTNGVVHANLFGIKDWVTPYKIAVLVLLNEMGRTGEGAVSLVERRKLNQLLLPLLQGPDITLSKLYKLIEESCPQLANSVQIRIKLMAEGELKDMEQFFDDLSDSFSGTEPEVHKTSVVGLFLRHMILAYSKLSFSQVFKLYTALQQYFQNGEKKTVEDADMDREDGEKQMEKEELDVSVREEEVSCSGPLSQKQAEFFLSQQAALLKNDETKALTPASLQKELNNLLKFNPDFAEAHYLSYLNNLRVQDVFSSTHSLLHYFDRLILTGAEGKSNGEEGYGRSLRYAALNLAALHCRFGHYQQAELALQEAIRIAQESNDHVCLQHCLSWLYVLGQKRADSYVLLEHSVKKAVHFGLPYLASLGIQSLVQQRAFAGKTANKLMDALKDSDLLHWKHSLSELIDISIAQKTAIWRLYGRSTMALQQAQMLLSMNSLESLNAGVQQNNTESFAVALCHLAELHAEQGCFAAAGEVLKHLKDRFPPNSQHAQLWMLCDQKIQFDRAMNDGKFHLADSLVTGITALNGIEGVYRKAVVLQAQNQMTEAHKLLQKLLTYCQKLKNTEMVISVLLSVAELYWRSSSPTIAMPVLLEALALSKEYRLQYLASETVLNLAYAQLILGIPEQALTLLHMAIEPILADGAVLDKGRAMFLVSKCQVASAASYDPVKKAEALEAAIQNLSEAKNYFAQVDCRERIRDVAYFQARLYHALGKTQERNHCAMIFRQLHQELPAHGVPLINHL.

Position 180 is a phosphoserine (S180). 13 TPR repeats span residues 194–234, 235–285, 286–322, 323–363, 364–403, 404–451, 452–485, 486–525, 526–565, 566–605, 606–645, 646–681, and 682–721; these read QKQA…FNPD, FAEA…GRSL, RYAALNLAALHCRFGHYQQAELALQEAIRIAQESNDH, VCLQ…YLAS, LGIQSLVQQRAFAGKTANKLMDALKDSDLLHWKHSLSELI, DISI…TESF, AVALCHLAELHAEQGCFAAAGEVLKHLKDRFPPN, SQHAQLWMLCDQKIQFDRAMNDGKFHLADSLVTGITALNG, IEGVYRKAVVLQAQNQMTEAHKLLQKLLTYCQKLKNTEMV, ISVLLSVAELYWRSSSPTIAMPVLLEALALSKEYRLQYLA, SETVLNLAYAQLILGIPEQALTLLHMAIEPILADGAVLDK, GRAMFLVSKCQVASAASYDPVKKAEALEAAIQNLSE, and AKNYFAQVDCRERIRDVAYFQARLYHALGKTQERNHCAMI. Position 217 is a phosphothreonine (T217).

Belongs to the APC5 family. In terms of assembly, the mammalian APC/C is composed at least of 14 distinct subunits ANAPC1, ANAPC2, CDC27/APC3, ANAPC4, ANAPC5, CDC16/APC6, ANAPC7, CDC23/APC8, ANAPC10, ANAPC11, CDC26/APC12, ANAPC13, ANAPC15 and ANAPC16 that assemble into a complex of at least 19 chains with a combined molecular mass of around 1.2 MDa; APC/C interacts with FZR1 and FBXO5.

The protein localises to the nucleus. Its subcellular location is the cytoplasm. It is found in the cytoskeleton. The protein resides in the spindle. It functions in the pathway protein modification; protein ubiquitination. In terms of biological role, component of the anaphase promoting complex/cyclosome (APC/C), a cell cycle-regulated E3 ubiquitin ligase that controls progression through mitosis and the G1 phase of the cell cycle. The APC/C complex acts by mediating ubiquitination and subsequent degradation of target proteins: it mainly mediates the formation of 'Lys-11'-linked polyubiquitin chains and, to a lower extent, the formation of 'Lys-48'- and 'Lys-63'-linked polyubiquitin chains. The APC/C complex catalyzes assembly of branched 'Lys-11'-/'Lys-48'-linked branched ubiquitin chains on target proteins. The chain is Anaphase-promoting complex subunit 5 (Anapc5) from Mus musculus (Mouse).